We begin with the raw amino-acid sequence, 510 residues long: Beta-1,4 N-acetylgalactosaminyltransferase 2 (510 aa).

The Cytoplasmic segment spans residues 1–15 (MTSSVSFASFRFPWL). The chain crosses the membrane as a helical; Signal-anchor for type II membrane protein span at residues 16–32 (LKTFVLMVGLATVAFMV). Over 33 to 510 (RKVSLTTDFS…YFKNHLYCST (478 aa)) the chain is Lumenal. Asn390 carries an N-linked (GlcNAc...) asparagine glycan.

The protein belongs to the glycosyltransferase 2 family. As to quaternary structure, homodimer; disulfide-linked.

Its subcellular location is the golgi apparatus. The protein localises to the trans-Golgi network membrane. It carries out the reaction an N-acetyl-alpha-neuraminyl-(2-&gt;3)-beta-D-galactosyl derivative + UDP-N-acetyl-alpha-D-galactosamine = an N-acetyl-beta-D-galactosaminyl-(1-&gt;4)-[N-acetyl-alpha-neuraminyl-(2-&gt;3)]-beta-D-galactosyl derivative + UDP + H(+). The enzyme catalyses a 3-O-{alpha-Neu5Ac-(2-&gt;3)-beta-D-Gal-(1-&gt;3)-[alpha-Neu5Ac-(2-&gt;6)]-alpha-D-GalNAc}-L-seryl-[protein] + UDP-N-acetyl-alpha-D-galactosamine = a 3-O-{[alpha-Neu5Ac-(2-&gt;3)]-beta-D-GalNAc-(1-&gt;4)-beta-D-Gal-(1-&gt;3)-[alpha-Neu5Ac-(2-&gt;6)]-alpha-D-GalNAc}-L-seryl-[protein] + UDP + H(+). It catalyses the reaction a 3-O-{alpha-Neu5Ac-(2-&gt;3)-beta-D-Gal-(1-&gt;3)-[alpha-Neu5Ac-(2-&gt;6)]-alpha-D-GalNAc}-L-threonyl-[protein] + UDP-N-acetyl-alpha-D-galactosamine = a 3-O-{[alpha-Neu5Ac-(2-&gt;3)]-beta-D-GalNAc-(1-&gt;4)-beta-D-Gal-(1-&gt;3)-[alpha-Neu5Ac-(2-&gt;6)]-alpha-D-GalNAc}-L-threonyl-[protein] + UDP + H(+). The catalysed reaction is a neolactoside IV(3)-alpha-NeuAc-nLc4Cer + UDP-N-acetyl-alpha-D-galactosamine = a neolactoside IV(4)-GalNAc,IV(3)-alpha-NeuAc-nLc4Cer + UDP + H(+). Its pathway is protein modification; protein glycosylation. It participates in glycolipid biosynthesis. Beta-1,4 N-acetylgalactosaminyltransferase involved in the biosynthesis of T-lymphocyte CT glycan antigen carried by CD45 family of protein phosphatases. Catalyzes the transfer of N-acetylgalactosamine (GalNAc) group in a beta-1,4-linkage from UDP-GalNAc to the galactose residue of NeuAcalpha2-&gt;3Gal-R to form GalNAcbeta1-&gt;4(NeuAcalpha2-&gt;3)Gal-R glycan epitope. The polypeptide is Beta-1,4 N-acetylgalactosaminyltransferase 2 (Mus musculus (Mouse)).